Here is a 372-residue protein sequence, read N- to C-terminus: 4-hydroxy-3-methylbut-2-en-1-yl diphosphate synthase (flavodoxin) (372 aa).

4 residues coordinate [4Fe-4S] cluster: C270, C273, C305, and E312.

This sequence belongs to the IspG family. Requires [4Fe-4S] cluster as cofactor.

It carries out the reaction (2E)-4-hydroxy-3-methylbut-2-enyl diphosphate + oxidized [flavodoxin] + H2O + 2 H(+) = 2-C-methyl-D-erythritol 2,4-cyclic diphosphate + reduced [flavodoxin]. It participates in isoprenoid biosynthesis; isopentenyl diphosphate biosynthesis via DXP pathway; isopentenyl diphosphate from 1-deoxy-D-xylulose 5-phosphate: step 5/6. Functionally, converts 2C-methyl-D-erythritol 2,4-cyclodiphosphate (ME-2,4cPP) into 1-hydroxy-2-methyl-2-(E)-butenyl 4-diphosphate. This is 4-hydroxy-3-methylbut-2-en-1-yl diphosphate synthase (flavodoxin) from Alteromonas mediterranea (strain DSM 17117 / CIP 110805 / LMG 28347 / Deep ecotype).